The following is a 526-amino-acid chain: Nucleobase-ascorbate transporter 4 (526 aa).

The next 12 helical transmembrane spans lie at 42–62 (IVMLGTTVIIPSILVPLMGGG), 69–89 (VINTVLFVSGINTLLQSLFGS), 91–111 (LPVVMGASYAYLIPALYITFS), 131–151 (IQGALIIASISHMIMGFFGLW), 157–177 (FLSPLSAAPLVILTGVGLLAF), 186–206 (IEIGLPALIILIILSQYLPHL), 217–237 (FAVLFTIAIVWAYAEILTAAG), 282–302 (AFAMMAATYVAIVETTGSFIA), 359–381 (RVVQISAGFMIFFSIFGKFGAVL), 388–410 (IFAALYCVLFAYVASAGLGLLQF), 420–440 (FILGFSIFIGLSVAQYFTEYL), and 457–477 (VIMQVIFSSAATVGIMAAFLL).

It belongs to the nucleobase:cation symporter-2 (NCS2) (TC 2.A.40) family. In terms of tissue distribution, highly expressed in the root central cylinder. Expressed in the filaments and stigmatic papillae of pollinated flowers and developing siliques.

Its subcellular location is the membrane. This chain is Nucleobase-ascorbate transporter 4 (NAT4), found in Arabidopsis thaliana (Mouse-ear cress).